Reading from the N-terminus, the 479-residue chain is Protein kinase 2 (479 aa).

Positions 1-136 (MGKGQSKIKN…NGNDDEDEGP (136 aa)) are disordered. Low complexity-rich tracts occupy residues 52-65 (AQQQ…TTAA) and 79-96 (IPAP…TPTI). Polar residues predominate over residues 102–115 (NTDNNNINGASNEA). Residues 153-407 (FELLNVIGKG…GGEVKQHPWF (255 aa)) form the Protein kinase domain. Residues 159 to 167 (IGKGSFGKV) and Lys182 each bind ATP. The active-site Proton acceptor is Asp276. Residue Thr309 is modified to Phosphothreonine; by autocatalysis. Residues 408–479 (KNIDWEKLDR…TYVADSILKD (72 aa)) enclose the AGC-kinase C-terminal domain. Thr470 is subject to Phosphothreonine.

It belongs to the protein kinase superfamily. AGC Ser/Thr protein kinase family. S6 kinase subfamily. In terms of processing, seems to be myristoylated.

It localises to the cytoplasm. It is found in the cell membrane. The catalysed reaction is L-seryl-[protein] + ATP = O-phospho-L-seryl-[protein] + ADP + H(+). It carries out the reaction L-threonyl-[protein] + ATP = O-phospho-L-threonyl-[protein] + ADP + H(+). Its function is as follows. Required for morphogenesis during multicellular development. Phosphorylates talB, gefN, gefS, PI4P 5-kinase and gacQ. The chain is Protein kinase 2 (pkgB) from Dictyostelium discoideum (Social amoeba).